Reading from the N-terminus, the 292-residue chain is Glycine--tRNA ligase alpha subunit (292 aa).

Belongs to the class-II aminoacyl-tRNA synthetase family. As to quaternary structure, tetramer of two alpha and two beta subunits.

The protein localises to the cytoplasm. The catalysed reaction is tRNA(Gly) + glycine + ATP = glycyl-tRNA(Gly) + AMP + diphosphate. The chain is Glycine--tRNA ligase alpha subunit from Synechococcus elongatus (strain ATCC 33912 / PCC 7942 / FACHB-805) (Anacystis nidulans R2).